Here is a 60-residue protein sequence, read N- to C-terminus: Large ribosomal subunit protein uL30 (60 aa).

It belongs to the universal ribosomal protein uL30 family. Part of the 50S ribosomal subunit.

The chain is Large ribosomal subunit protein uL30 from Verminephrobacter eiseniae (strain EF01-2).